The following is an 85-amino-acid chain: Beta-insect depressant toxin Lqh-dprIT3a (85 aa).

Residues 1–21 (MKLLLLLTISASMLIEGLVNA) form the signal peptide. The region spanning 22 to 82 (DGYIRGGDGC…EWDYETNTCG (61 aa)) is the LCN-type CS-alpha/beta domain. Disulfide bonds link Cys-31/Cys-81, Cys-35/Cys-56, Cys-42/Cys-63, and Cys-46/Cys-65. Gly-82 is modified (glycine amide).

This sequence belongs to the long (4 C-C) scorpion toxin superfamily. Sodium channel inhibitor family. Beta subfamily. As to expression, expressed by the venom gland.

It is found in the secreted. Depressant insect beta-toxins cause a transient contraction paralysis followed by a slow flaccid paralysis. They bind voltage-independently at site-4 of sodium channels (Nav) and block action potentials, primarily by depolarizing the axonal membrane and suppressing the sodium current. This depressant toxin is active only on insects. It is found in a relatively small amount in the venom, and its activity on insects is 10-fold higher compared to other known depressant toxins. The protein is Beta-insect depressant toxin Lqh-dprIT3a of Leiurus hebraeus (Hebrew deathstalker scorpion).